A 660-amino-acid polypeptide reads, in one-letter code: MTITRHARIDWDEQGNPRSRDFSDVYFSTESGLDETRHVFLVQNDLRRRFSELPEDGRLIIGETGFGTGLNFLCAWQLFDECAPAEARLQFVSVEKYPLSRADLQRALALWPELSRFARQLLDQYVAVHEGFQRLAFDDGRVTLTLLIGDALQMLPQLDGQIDAWFLDGFAPAKNPEMWTPELFAELARLSAPSATIGTFTSTGWVRRSLNAAGFKMKRVPGIGHKWEVLRGTFIAWPEDVAHPPAAKPWFARPAPIGGERKALVIGAGLAGCATAQSLAQRGWQVSLLERHAAPAQEASGNPQGVLYLKLSAHGTALSQLILSGFGHTRRLLERLQRGVDWDACGVLQLTFDDKEAQRQKQLADAFPESLLHLLDQPAAEAQSGVALNSGGLFYPEGGWVHPPALCHAQAAHANIRLIAHQQALELRRVDDQWQVWSDEQLIDSAPVVVLAGAADIQKFSQSADLPLKRIRGQITRLPQTQASAALRSVVCAEGYVAPARLGEHTLGASFDFNSTDLTPNLADHLGNLGLLREISEDLTSRLDTADLSPEQLQGRAAFRCTSPDYLPIVGPLADREAFLQAYAALGKDARQVPNIACPWLDGLYVNSGHGSRGLITAPLCGELIAAWVDNEPLPLPRSVAEACHPNRFALRGLIRGGGK.

The interval 1–235 (MTITRHARID…KWEVLRGTFI (235 aa)) is tRNA (mnm(5)s(2)U34)-methyltransferase. The FAD-dependent cmnm(5)s(2)U34 oxidoreductase stretch occupies residues 266 to 660 (IGAGLAGCAT…LRGLIRGGGK (395 aa)).

This sequence in the N-terminal section; belongs to the methyltransferase superfamily. tRNA (mnm(5)s(2)U34)-methyltransferase family. It in the C-terminal section; belongs to the DAO family. It depends on FAD as a cofactor.

It is found in the cytoplasm. It carries out the reaction 5-aminomethyl-2-thiouridine(34) in tRNA + S-adenosyl-L-methionine = 5-methylaminomethyl-2-thiouridine(34) in tRNA + S-adenosyl-L-homocysteine + H(+). Catalyzes the last two steps in the biosynthesis of 5-methylaminomethyl-2-thiouridine (mnm(5)s(2)U) at the wobble position (U34) in tRNA. Catalyzes the FAD-dependent demodification of cmnm(5)s(2)U34 to nm(5)s(2)U34, followed by the transfer of a methyl group from S-adenosyl-L-methionine to nm(5)s(2)U34, to form mnm(5)s(2)U34. This is tRNA 5-methylaminomethyl-2-thiouridine biosynthesis bifunctional protein MnmC from Pseudomonas savastanoi pv. phaseolicola (strain 1448A / Race 6) (Pseudomonas syringae pv. phaseolicola (strain 1448A / Race 6)).